Consider the following 118-residue polypeptide: Large ribosomal subunit protein bL19 (118 aa).

This sequence belongs to the bacterial ribosomal protein bL19 family.

In terms of biological role, this protein is located at the 30S-50S ribosomal subunit interface and may play a role in the structure and function of the aminoacyl-tRNA binding site. In Geotalea uraniireducens (strain Rf4) (Geobacter uraniireducens), this protein is Large ribosomal subunit protein bL19.